The chain runs to 251 residues: Type III pantothenate kinase (251 aa).

6 to 13 lines the ATP pocket; sequence DCGNSFIK. Substrate is bound by residues Tyr93 and 100–103; that span reads GLDR. Residue Asp102 is the Proton acceptor of the active site. Asp122 contributes to the K(+) binding site. Thr125 provides a ligand contact to ATP. Position 182 (Thr182) interacts with substrate.

Belongs to the type III pantothenate kinase family. Homodimer. Requires NH4(+) as cofactor. The cofactor is K(+).

The protein resides in the cytoplasm. The enzyme catalyses (R)-pantothenate + ATP = (R)-4'-phosphopantothenate + ADP + H(+). It participates in cofactor biosynthesis; coenzyme A biosynthesis; CoA from (R)-pantothenate: step 1/5. Its function is as follows. Catalyzes the phosphorylation of pantothenate (Pan), the first step in CoA biosynthesis. In Azotobacter vinelandii (strain DJ / ATCC BAA-1303), this protein is Type III pantothenate kinase.